An 89-amino-acid polypeptide reads, in one-letter code: Small ribosomal subunit protein uS15 (89 aa).

The protein belongs to the universal ribosomal protein uS15 family. In terms of assembly, part of the 30S ribosomal subunit. Forms a bridge to the 50S subunit in the 70S ribosome, contacting the 23S rRNA.

One of the primary rRNA binding proteins, it binds directly to 16S rRNA where it helps nucleate assembly of the platform of the 30S subunit by binding and bridging several RNA helices of the 16S rRNA. Its function is as follows. Forms an intersubunit bridge (bridge B4) with the 23S rRNA of the 50S subunit in the ribosome. The chain is Small ribosomal subunit protein uS15 from Buchnera aphidicola subsp. Baizongia pistaciae (strain Bp).